Consider the following 54-residue polypeptide: IVTVDCSDYPRPVCTLDYMPLCGSDNKTYSNKCNFCNAVVDSNGTITLSHFGRC.

The region spanning 4-54 (VDCSDYPRPVCTLDYMPLCGSDNKTYSNKCNFCNAVVDSNGTITLSHFGRC) is the Kazal-like domain. Cystine bridges form between Cys-6–Cys-36, Cys-14–Cys-33, and Cys-22–Cys-54. Asn-43 carries an N-linked (GlcNAc...) asparagine glycan.

It is found in the secreted. The protein is Ovomucoid of Corvus albus (Pied crow).